The chain runs to 367 residues: MHFQLLGLAALGSLAAAAPAPSRTSELVERGSSCTFTSAAQASASAKSCSNIVLKNIAVPAGETLDLSKAKDGATITFEGTTTFGYKEWKGPLIRFGGNKITVTQAAGAVIDGQGSRWWDGKGTNGGKTKPKFIYAHKLQSSTIKGLHVKNSPVQVFSVQGNDVHLTDITIDNSDGDNNGGHNTDAFDVSESNGVYITGANVKNQDDCLAINSGENIEFTGATCSGGHGISIGSIGNRDSNTVKNVKVADSTVVDSDNGIRIKTISGATGSVSGVTYENITLKNIKKNGIVIEQDYKNGGPTGKPTTGVPITDLTVNGVTGSVASKATPVYILCGKGSCSDWTWKGVSISGGKKSDKCQNIPSGASC.

The first 17 residues, 1 to 17 (MHFQLLGLAALGSLAAA), serve as a signal peptide directing secretion. The propeptide occupies 18–30 (APAPSRTSELVER). Cys34 and Cys49 are oxidised to a cystine. PbH1 repeat units lie at residues 161-191 (GNDV…DVSE), 192-213 (SNGV…AINS), 214-234 (GENI…SIGS), 243-264 (VKNV…RIKT), and 272-294 (VSGV…VIEQ). Residue Asp206 is the Proton donor of the active site. An intrachain disulfide couples Cys208 to Cys224. The active site involves His228. Residue Asn279 is glycosylated (N-linked (GlcNAc...) asparagine). 2 disulfide bridges follow: Cys334–Cys339 and Cys358–Cys367.

This sequence belongs to the glycosyl hydrolase 28 family.

The protein localises to the secreted. It carries out the reaction (1,4-alpha-D-galacturonosyl)n+m + H2O = (1,4-alpha-D-galacturonosyl)n + (1,4-alpha-D-galacturonosyl)m.. Its function is as follows. Involved in maceration and soft-rotting of plant tissue. Hydrolyzes the 1,4-alpha glycosidic bonds of de-esterified pectate in the smooth region of the plant cell wall. The protein is Endopolygalacturonase B (pgaB) of Aspergillus flavus (strain ATCC MYA-384 / AF70).